The following is a 323-amino-acid chain: SPbeta prophage-derived uncharacterized protein YorG (323 aa).

Residues 222–272 adopt a coiled-coil conformation; sequence TAENLEKAIIEAVERQEQAEGIVAVTYEEQKQNNASEELDFNSLMDQIKEI.

The protein is SPbeta prophage-derived uncharacterized protein YorG (yorG) of Bacillus subtilis (strain 168).